We begin with the raw amino-acid sequence, 266 residues long: Vitamin B12-binding protein (266 aa).

An N-terminal signal peptide occupies residues 1 to 22 (MAKSLFRALVALSFLAPLWLNA). The Fe/B12 periplasmic-binding domain maps to 25-266 (RVITLSPANT…QLCNALSQVD (242 aa)). Cyanocob(III)alamin-binding positions include tyrosine 50 and 242–246 (DWFER). A disulfide bond links cysteine 183 and cysteine 259.

The protein belongs to the BtuF family. As to quaternary structure, the complex is composed of two ATP-binding proteins (BtuD), two transmembrane proteins (BtuC) and a solute-binding protein (BtuF).

It localises to the periplasm. Part of the ABC transporter complex BtuCDF involved in vitamin B12 import. Binds vitamin B12 and delivers it to the periplasmic surface of BtuC. This is Vitamin B12-binding protein from Shigella flexneri.